Here is a 151-residue protein sequence, read N- to C-terminus: Arginine repressor (151 aa).

This sequence belongs to the ArgR family.

It localises to the cytoplasm. It functions in the pathway amino-acid biosynthesis; L-arginine biosynthesis [regulation]. Functionally, regulates arginine biosynthesis genes. The protein is Arginine repressor of Heliobacterium modesticaldum (strain ATCC 51547 / Ice1).